A 193-amino-acid chain; its full sequence is Cell wall galactomannoprotein (193 aa).

The first 17 residues, 1-17 (MFFRILALLPLVFLVTA), serve as a signal peptide directing secretion. N-linked (GlcNAc...) asparagine glycosylation is found at N38 and N173.

It belongs to the cell wall mannoprotein 1 family. Galactomannoprotein, glycosylated.

It localises to the secreted. Its subcellular location is the cell wall. In terms of biological role, constitutive protein of the cell wall. The sequence is that of Cell wall galactomannoprotein from Armillaria ostoyae (Armillaria root rot fungus).